A 175-amino-acid chain; its full sequence is Shikimate kinase (175 aa).

12 to 17 (GAGKTT) lines the ATP pocket. Residue Thr-16 participates in Mg(2+) binding. Residues Asp-34, Arg-58, and Gly-80 each contribute to the substrate site. Residue Arg-117 coordinates ATP. Arg-136 contributes to the substrate binding site.

The protein belongs to the shikimate kinase family. Monomer. Requires Mg(2+) as cofactor.

The protein localises to the cytoplasm. The catalysed reaction is shikimate + ATP = 3-phosphoshikimate + ADP + H(+). The protein operates within metabolic intermediate biosynthesis; chorismate biosynthesis; chorismate from D-erythrose 4-phosphate and phosphoenolpyruvate: step 5/7. In terms of biological role, catalyzes the specific phosphorylation of the 3-hydroxyl group of shikimic acid using ATP as a cosubstrate. In Saccharopolyspora erythraea (strain ATCC 11635 / DSM 40517 / JCM 4748 / NBRC 13426 / NCIMB 8594 / NRRL 2338), this protein is Shikimate kinase.